The following is an 85-amino-acid chain: Small ribosomal subunit protein bS16c (85 aa).

The protein belongs to the bacterial ribosomal protein bS16 family.

It is found in the plastid. The protein localises to the chloroplast. This is Small ribosomal subunit protein bS16c from Oryza nivara (Indian wild rice).